Here is a 127-residue protein sequence, read N- to C-terminus: Small ribosomal subunit protein uS11 (127 aa).

Belongs to the universal ribosomal protein uS11 family. As to quaternary structure, part of the 30S ribosomal subunit. Interacts with proteins S7 and S18. Binds to IF-3.

Functionally, located on the platform of the 30S subunit, it bridges several disparate RNA helices of the 16S rRNA. Forms part of the Shine-Dalgarno cleft in the 70S ribosome. This chain is Small ribosomal subunit protein uS11, found in Pelodictyon phaeoclathratiforme (strain DSM 5477 / BU-1).